Here is a 579-residue protein sequence, read N- to C-terminus: MDICDISASQLATSPPPRTAIDFNSSIEESPVKRVKFSPELTKSFEETLSPTVTLVLRNNEEVIFDRYLLSFYSNYFRVLFSSKFRDSNSTTHRIRLISASDLHFLLTIPKAFEQGIKPNITLQKAIELLEPAAFLQMSIALDYISDIICKNLTHENIIKIFRLALLYHTTLAVRVWRSMVRKFQTLFATNVYLSLKENELIGLLTDKHLNLKSEDETTVVVNWIKHNSPLQSDRLTQFAQRNFSRRPQPDATKYEVIRTRQPMDAIVCFGGWASRGVAQKIEVCNTRSDRWQTCNFNYDIPNIHRAYHGIEVVEDKLIVYGGFDGIKQFQTTVLFDLSTKEWRRGANMNDKRCYVTSARVNDSYGRPLVFACGGMNGVSRLKTAEMYDYRADQWTEVANMTQMRSDGAVVTIDNKIVAIGGFDGRNIHQGGEVYDPVLDLWHPLSSNMRTRRTGCTAVSIMNQVCMIIGGFNGNRRLDSAEIYDMREGLWHPEPTLQTARSNFSACQMDTCYVYVAGGFDGQTTTKESERLDLRSKMWQALPDMAEAKSALRMVTLSDHPFLDELFDIPDDTGIVTSW.

Positions 51–119 (PTVTLVLRNN…PKAFEQGIKP (69 aa)) constitute a BTB domain. Kelch repeat units lie at residues 266-316 (AIVC…VVED), 317-363 (KLIV…RVND), 369-415 (LVFA…TIDN), 417-463 (IVAI…SIMN), 465-511 (VCMI…QMDT), and 513-559 (YVYV…TLSD).

The chain is Kelch repeat and BTB domain-containing protein F47D12.7 from Caenorhabditis elegans.